The following is a 444-amino-acid chain: Interferon-induced protein 44 (444 aa).

The 152-residue stretch at Met1–Glu152 folds into the TLDc domain.

Belongs to the IFI44 family. In terms of tissue distribution, hepatocytes.

It localises to the cytoplasm. Functionally, this protein aggregates to form microtubular structures. The protein is Interferon-induced protein 44 (IFI44) of Pan troglodytes (Chimpanzee).